The chain runs to 341 residues: Methionine import ATP-binding protein MetN 3 (341 aa).

The ABC transporter domain occupies 2-241 (ILLENVKKIY…PKQDITKRFV (240 aa)). ATP is bound at residue 38–45 (GYSGAGKS).

This sequence belongs to the ABC transporter superfamily. Methionine importer (TC 3.A.1.24) family. In terms of assembly, the complex is composed of two ATP-binding proteins (MetN), two transmembrane proteins (MetI) and a solute-binding protein (MetQ).

The protein localises to the cell membrane. The catalysed reaction is L-methionine(out) + ATP + H2O = L-methionine(in) + ADP + phosphate + H(+). It catalyses the reaction D-methionine(out) + ATP + H2O = D-methionine(in) + ADP + phosphate + H(+). In terms of biological role, part of the ABC transporter complex MetNIQ involved in methionine import. Responsible for energy coupling to the transport system. In Bacillus cereus (strain ATCC 14579 / DSM 31 / CCUG 7414 / JCM 2152 / NBRC 15305 / NCIMB 9373 / NCTC 2599 / NRRL B-3711), this protein is Methionine import ATP-binding protein MetN 3.